Here is a 332-residue protein sequence, read N- to C-terminus: Ketol-acid reductoisomerase (NADP(+)) (332 aa).

The KARI N-terminal Rossmann domain maps to 3 to 183 (TEIFYDADAD…GGARAGVIKT (181 aa)). NADP(+)-binding positions include 26 to 29 (YGSQ), S52, S54, and 84 to 87 (DTKQ). H109 is a catalytic residue. G135 is an NADP(+) binding site. A KARI C-terminal knotted domain is found at 184–329 (TFTEETETDL…KKLRSLMSWT (146 aa)). 4 residues coordinate Mg(2+): D192, E196, E228, and E232. S253 is a substrate binding site.

The protein belongs to the ketol-acid reductoisomerase family. Requires Mg(2+) as cofactor.

It carries out the reaction (2R)-2,3-dihydroxy-3-methylbutanoate + NADP(+) = (2S)-2-acetolactate + NADPH + H(+). The catalysed reaction is (2R,3R)-2,3-dihydroxy-3-methylpentanoate + NADP(+) = (S)-2-ethyl-2-hydroxy-3-oxobutanoate + NADPH + H(+). It functions in the pathway amino-acid biosynthesis; L-isoleucine biosynthesis; L-isoleucine from 2-oxobutanoate: step 2/4. Its pathway is amino-acid biosynthesis; L-valine biosynthesis; L-valine from pyruvate: step 2/4. Involved in the biosynthesis of branched-chain amino acids (BCAA). Catalyzes an alkyl-migration followed by a ketol-acid reduction of (S)-2-acetolactate (S2AL) to yield (R)-2,3-dihydroxy-isovalerate. In the isomerase reaction, S2AL is rearranged via a Mg-dependent methyl migration to produce 3-hydroxy-3-methyl-2-ketobutyrate (HMKB). In the reductase reaction, this 2-ketoacid undergoes a metal-dependent reduction by NADPH to yield (R)-2,3-dihydroxy-isovalerate. The protein is Ketol-acid reductoisomerase (NADP(+)) of Saccharopolyspora erythraea (strain ATCC 11635 / DSM 40517 / JCM 4748 / NBRC 13426 / NCIMB 8594 / NRRL 2338).